The chain runs to 391 residues: Homocysteine-responsive endoplasmic reticulum-resident ubiquitin-like domain member 1 protein (391 aa).

Residue Met-1 is modified to N-acetylmethionine. Residues 1-263 (MESETEPEPV…VEEDDEINRD (263 aa)) are Cytoplasmic-facing. One can recognise a Ubiquitin-like domain in the interval 10 to 72 (VTLLVKSPNQ…LLDHQCLRDL (63 aa)). Positions 100-126 (KVAESTEEPAGSNRGQYPEDSSSDGLR) are disordered. The span at 112 to 124 (NRGQYPEDSSSDG) shows a compositional bias: polar residues. The tract at residues 115-200 (QYPEDSSSDG…ASGAFVPPPS (86 aa)) is interaction with UBQLN1. Ser-135 carries the phosphoserine modification. Residues 170–190 (LSWFQQIYARQYYMQYLAATA) form an interaction with SYVN1 region. A helical transmembrane segment spans residues 264–284 (WLDWTYSAATFSVFLSILYFY). At 285 to 289 (SSLSR) the chain is on the lumenal side. The chain crosses the membrane as a helical span at residues 290 to 310 (FLMVMGATVVMYLHHVGWFPF). Residues 311-391 (RPRPVQNFPN…LPEGPPAIAN (81 aa)) lie on the Cytoplasmic side of the membrane. Positions 318–359 (FPNDGPPPDVVNQDPNNNLQEGTDPETEDPNHLPPDRDVLDG) are disordered. Positions 346-357 (DPNHLPPDRDVL) are enriched in basic and acidic residues.

Interacts with PSEN1 and PSEN2. Interacts with UBXN6. Interacts with UBQLN1, UBQLN2 and UBQLN4. Component of the HRD1 complex, which comprises at least SYNV1/HRD1, FAM8A1, HERPUD1/HERP, OS9, SEL1L and UBE2J1. FAM8A1 binding to SYNV1 may promote recruitment of HERPUD1 to the HRD1 complex. In terms of tissue distribution, widely expressed; in the brain, expression seems to be restricted to neurons and vascular smooth muscle cells. Present in activated microglia in senile plaques in the brain of patients with Alzheimer disease.

The protein localises to the endoplasmic reticulum membrane. Functionally, component of the endoplasmic reticulum quality control (ERQC) system also called ER-associated degradation (ERAD) involved in ubiquitin-dependent degradation of misfolded endoplasmic reticulum proteins. Could enhance presenilin-mediated amyloid-beta protein 40 generation. Binds to ubiquilins and this interaction is required for efficient degradation of CD3D via the ERAD pathway. This chain is Homocysteine-responsive endoplasmic reticulum-resident ubiquitin-like domain member 1 protein (HERPUD1), found in Homo sapiens (Human).